We begin with the raw amino-acid sequence, 379 residues long: Cytochrome b (379 aa).

4 helical membrane-spanning segments follow: residues phenylalanine 34–methionine 54, tryptophan 78–isoleucine 99, tryptophan 114–leucine 134, and phenylalanine 179–threonine 199. Histidine 84 and histidine 98 together coordinate heme b. Heme b contacts are provided by histidine 183 and histidine 197. Histidine 202 lines the a ubiquinone pocket. Helical transmembrane passes span leucine 227–serine 247, leucine 289–histidine 309, phenylalanine 321–serine 341, and phenylalanine 348–proline 368.

It belongs to the cytochrome b family. As to quaternary structure, the cytochrome bc1 complex contains 11 subunits: 3 respiratory subunits (MT-CYB, CYC1 and UQCRFS1), 2 core proteins (UQCRC1 and UQCRC2) and 6 low-molecular weight proteins (UQCRH/QCR6, UQCRB/QCR7, UQCRQ/QCR8, UQCR10/QCR9, UQCR11/QCR10 and a cleavage product of UQCRFS1). This cytochrome bc1 complex then forms a dimer. Heme b is required as a cofactor.

The protein localises to the mitochondrion inner membrane. In terms of biological role, component of the ubiquinol-cytochrome c reductase complex (complex III or cytochrome b-c1 complex) that is part of the mitochondrial respiratory chain. The b-c1 complex mediates electron transfer from ubiquinol to cytochrome c. Contributes to the generation of a proton gradient across the mitochondrial membrane that is then used for ATP synthesis. The polypeptide is Cytochrome b (MT-CYB) (Apteryx australis (Southern brown kiwi)).